The primary structure comprises 499 residues: Bestrophin homolog 22 (499 aa).

Helical transmembrane passes span 29–49, 77–97, 235–255, and 267–287; these read WKAV…ISCI, IPLT…WGSI, LVYP…CLIG, and GIDL…MGWM. The span at 417–432 shows a compositional bias: basic and acidic residues; sequence HNAKHAKQRGLERANS. 2 disordered regions span residues 417-455 and 474-499; these read HNAK…ANGS and TSNP…TSRH.

Belongs to the anion channel-forming bestrophin (TC 1.A.46) family. Calcium-sensitive chloride channel subfamily. In terms of assembly, forms oligomers.

Its subcellular location is the cell membrane. Functionally, forms chloride channels. In Caenorhabditis elegans, this protein is Bestrophin homolog 22 (best-22).